A 1409-amino-acid polypeptide reads, in one-letter code: DNA-directed RNA polymerase subunit beta' (1409 aa).

The Zn(2+) site is built by Cys70, Cys72, Cys85, and Cys88. Residues Asp460, Asp462, and Asp464 each contribute to the Mg(2+) site. Cys814, Cys888, Cys895, and Cys898 together coordinate Zn(2+).

This sequence belongs to the RNA polymerase beta' chain family. As to quaternary structure, the RNAP catalytic core consists of 2 alpha, 1 beta, 1 beta' and 1 omega subunit. When a sigma factor is associated with the core the holoenzyme is formed, which can initiate transcription. Mg(2+) serves as cofactor. It depends on Zn(2+) as a cofactor.

The catalysed reaction is RNA(n) + a ribonucleoside 5'-triphosphate = RNA(n+1) + diphosphate. Functionally, DNA-dependent RNA polymerase catalyzes the transcription of DNA into RNA using the four ribonucleoside triphosphates as substrates. This is DNA-directed RNA polymerase subunit beta' from Shewanella violacea.